A 335-amino-acid chain; its full sequence is Pyridoxal 5'-phosphate synthase subunit PdxS (335 aa).

Asp-30 serves as a coordination point for D-ribose 5-phosphate. The active-site Schiff-base intermediate with D-ribose 5-phosphate is Lys-87. Gly-159 lines the D-ribose 5-phosphate pocket. Arg-171 lines the D-glyceraldehyde 3-phosphate pocket. Residues Gly-257 and 278-279 each bind D-ribose 5-phosphate; that span reads GS.

The protein belongs to the PdxS/SNZ family. As to quaternary structure, in the presence of PdxT, forms a dodecamer of heterodimers.

It carries out the reaction aldehydo-D-ribose 5-phosphate + D-glyceraldehyde 3-phosphate + L-glutamine = pyridoxal 5'-phosphate + L-glutamate + phosphate + 3 H2O + H(+). It participates in cofactor biosynthesis; pyridoxal 5'-phosphate biosynthesis. Functionally, catalyzes the formation of pyridoxal 5'-phosphate from ribose 5-phosphate (RBP), glyceraldehyde 3-phosphate (G3P) and ammonia. The ammonia is provided by the PdxT subunit. Can also use ribulose 5-phosphate and dihydroxyacetone phosphate as substrates, resulting from enzyme-catalyzed isomerization of RBP and G3P, respectively. This is Pyridoxal 5'-phosphate synthase subunit PdxS from Thermococcus gammatolerans (strain DSM 15229 / JCM 11827 / EJ3).